A 476-amino-acid polypeptide reads, in one-letter code: Ribosomal RNA small subunit methyltransferase F (476 aa).

S-adenosyl-L-methionine-binding positions include 124–130, Glu148, Asp175, and Asp193; that span reads ASAPGSK. Residue Cys246 is the Nucleophile of the active site.

It belongs to the class I-like SAM-binding methyltransferase superfamily. RsmB/NOP family.

The protein localises to the cytoplasm. The enzyme catalyses cytidine(1407) in 16S rRNA + S-adenosyl-L-methionine = 5-methylcytidine(1407) in 16S rRNA + S-adenosyl-L-homocysteine + H(+). Functionally, specifically methylates the cytosine at position 1407 (m5C1407) of 16S rRNA. This chain is Ribosomal RNA small subunit methyltransferase F, found in Photobacterium profundum (strain SS9).